Consider the following 497-residue polypeptide: Protein nucleotidyltransferase YdiU (497 aa).

8 residues coordinate ATP: Gly92, Gly94, Arg95, Lys114, Asp126, Gly127, Arg177, and Arg184. Asp261 acts as the Proton acceptor in catalysis. Mg(2+)-binding residues include Asn262 and Asp271. An ATP-binding site is contributed by Asp271.

It belongs to the SELO family. Mg(2+) is required as a cofactor. Requires Mn(2+) as cofactor.

The catalysed reaction is L-seryl-[protein] + ATP = 3-O-(5'-adenylyl)-L-seryl-[protein] + diphosphate. The enzyme catalyses L-threonyl-[protein] + ATP = 3-O-(5'-adenylyl)-L-threonyl-[protein] + diphosphate. It catalyses the reaction L-tyrosyl-[protein] + ATP = O-(5'-adenylyl)-L-tyrosyl-[protein] + diphosphate. It carries out the reaction L-histidyl-[protein] + UTP = N(tele)-(5'-uridylyl)-L-histidyl-[protein] + diphosphate. The catalysed reaction is L-seryl-[protein] + UTP = O-(5'-uridylyl)-L-seryl-[protein] + diphosphate. The enzyme catalyses L-tyrosyl-[protein] + UTP = O-(5'-uridylyl)-L-tyrosyl-[protein] + diphosphate. Functionally, nucleotidyltransferase involved in the post-translational modification of proteins. It can catalyze the addition of adenosine monophosphate (AMP) or uridine monophosphate (UMP) to a protein, resulting in modifications known as AMPylation and UMPylation. This chain is Protein nucleotidyltransferase YdiU, found in Bordetella petrii (strain ATCC BAA-461 / DSM 12804 / CCUG 43448).